The following is a 387-amino-acid chain: Pyrophosphate--fructose 6-phosphate 1-phosphotransferase 3 (387 aa).

Gly15 lines the diphosphate pocket. Asp114 lines the Mg(2+) pocket. Substrate is bound by residues 140–142 (TID), 186–188 (MGR), Glu247, and 308–311 (YELR). The Proton acceptor role is filled by Asp142.

Belongs to the phosphofructokinase type A (PFKA) family. PPi-dependent PFK group II subfamily. Clade 'Short' sub-subfamily. As to quaternary structure, homotetramer. It depends on Mg(2+) as a cofactor.

It is found in the cytoplasm. It catalyses the reaction beta-D-fructose 6-phosphate + diphosphate = beta-D-fructose 1,6-bisphosphate + phosphate + H(+). It functions in the pathway carbohydrate degradation; glycolysis; D-glyceraldehyde 3-phosphate and glycerone phosphate from D-glucose: step 3/4. With respect to regulation, non-allosteric. Functionally, catalyzes the phosphorylation of D-fructose 6-phosphate, the first committing step of glycolysis. Uses inorganic phosphate (PPi) as phosphoryl donor instead of ATP like common ATP-dependent phosphofructokinases (ATP-PFKs), which renders the reaction reversible, and can thus function both in glycolysis and gluconeogenesis. Consistently, PPi-PFK can replace the enzymes of both the forward (ATP-PFK) and reverse (fructose-bisphosphatase (FBPase)) reactions. The protein is Pyrophosphate--fructose 6-phosphate 1-phosphotransferase 3 (pfk3) of Trichomonas vaginalis (strain ATCC PRA-98 / G3).